Reading from the N-terminus, the 129-residue chain is Transmembrane protein 105 (129 aa).

2 consecutive transmembrane segments (helical) span residues 23 to 43 (AGNV…TAWL) and 94 to 114 (FLAG…CGVV).

It localises to the membrane. The sequence is that of Transmembrane protein 105 (TMEM105) from Homo sapiens (Human).